The following is a 276-amino-acid chain: MTLWELFVAAILGIVEGLTEYAPVSSTGHMIIVDDIWLKSSNLMSEEAANSFKVVIQLGSILAVAIVFKDRILNLLGLKKNITSDQEQGHKLSIAQIAVGLVPAAVLGFLFEDYIDEYLFSVKTVAIGLIAGAILMLFADWVNKRKTATDTLDRISYKQAIAVGLFQCLSLWPGFSRSGSTISGGVILGLNHRAAADFTFIMAMPIMMGASFLSLVKHWDSLSSDLMPFFIVGFICAFVVALFVVRFFLRLINKIKLVPFAIYRIILGVILLLIMM.

Transmembrane regions (helical) follow at residues 48 to 68 (AANSFKVVIQLGSILAVAIVF), 92 to 112 (LSIAQIAVGLVPAAVLGFLFE), 119 to 139 (LFSVKTVAIGLIAGAILMLFA), 155 to 175 (ISYKQAIAVGLFQCLSLWPGF), 196 to 216 (ADFTFIMAMPIMMGASFLSLV), 225 to 245 (DLMPFFIVGFICAFVVALFVV), and 255 to 275 (IKLVPFAIYRIILGVILLLIM).

The protein belongs to the UppP family.

It localises to the cell membrane. The enzyme catalyses di-trans,octa-cis-undecaprenyl diphosphate + H2O = di-trans,octa-cis-undecaprenyl phosphate + phosphate + H(+). Functionally, catalyzes the dephosphorylation of undecaprenyl diphosphate (UPP). Confers resistance to bacitracin. The sequence is that of Undecaprenyl-diphosphatase from Bacillus subtilis (strain 168).